Reading from the N-terminus, the 805-residue chain is DNA gyrase subunit B (805 aa).

The 116-residue stretch at 431 to 546 folds into the Toprim domain; it reads CEMYIVEGDS…NECVYIAQPP (116 aa). Mg(2+) is bound by residues glutamate 437, aspartate 511, and aspartate 513.

This sequence belongs to the type II topoisomerase GyrB family. As to quaternary structure, heterotetramer, composed of two GyrA and two GyrB chains. In the heterotetramer, GyrA contains the active site tyrosine that forms a transient covalent intermediate with DNA, while GyrB binds cofactors and catalyzes ATP hydrolysis. Requires Mg(2+) as cofactor. Mn(2+) serves as cofactor. The cofactor is Ca(2+).

It localises to the cytoplasm. It carries out the reaction ATP-dependent breakage, passage and rejoining of double-stranded DNA.. Functionally, a type II topoisomerase that negatively supercoils closed circular double-stranded (ds) DNA in an ATP-dependent manner to modulate DNA topology and maintain chromosomes in an underwound state. Negative supercoiling favors strand separation, and DNA replication, transcription, recombination and repair, all of which involve strand separation. Also able to catalyze the interconversion of other topological isomers of dsDNA rings, including catenanes and knotted rings. Type II topoisomerases break and join 2 DNA strands simultaneously in an ATP-dependent manner. The polypeptide is DNA gyrase subunit B (Chlamydia pneumoniae (Chlamydophila pneumoniae)).